Consider the following 497-residue polypeptide: Aldehyde dehydrogenase (497 aa).

241–246 is an NAD(+) binding site; sequence GSTVVG. The Proton acceptor role is filled by Glu-264. Cys-298 serves as the catalytic Nucleophile.

Belongs to the aldehyde dehydrogenase family.

The protein resides in the cytoplasm. The enzyme catalyses an aldehyde + NAD(+) + H2O = a carboxylate + NADH + 2 H(+). It functions in the pathway alcohol metabolism; ethanol degradation; acetate from ethanol: step 2/2. The sequence is that of Aldehyde dehydrogenase (ALTA10) from Alternaria alternata (Alternaria rot fungus).